The following is a 556-amino-acid chain: Thermosome subunit beta (556 aa).

The interval 530 to 556 (LSTDKGDDDGGAGGMGGGMGGGMGGMM) is disordered. Positions 540-556 (GAGGMGGGMGGGMGGMM) are enriched in gly residues.

It belongs to the TCP-1 chaperonin family. Forms an oligomeric complex of eight-membered rings.

In terms of biological role, molecular chaperone; binds unfolded polypeptides in vitro, and has a weak ATPase activity. The chain is Thermosome subunit beta (thsB) from Halobacterium salinarum (strain ATCC 700922 / JCM 11081 / NRC-1) (Halobacterium halobium).